Reading from the N-terminus, the 205-residue chain is Dr1-associated corepressor (205 aa).

Residues 14 to 77 enclose the Histone-fold domain; the sequence is PARIKKIMQT…SHLKQCIELE (64 aa). Residues 91–205 are disordered; it reads PDMQGDGEDN…EAEDEEDYDS (115 aa). Over residues 98–108 the composition is skewed to basic and acidic residues; it reads EDNHTDGDKGP. Residues 138–155 show a composition bias toward acidic residues; the sequence is SEQEDESEDTDTDGEEET. The span at 172 to 193 shows a compositional bias: pro residues; sequence PPTPFMPFTSPLPLPPAPPGPS. Residues 196-205 are compositionally biased toward acidic residues; the sequence is EAEDEEDYDS.

The protein belongs to the NC2 alpha/DRAP1 family. As to quaternary structure, heterodimer with DR1. Binds BTAF1. Post-translationally, phosphorylation reduces DNA binding, but has no effect on heterodimerization and TBP binding.

The protein resides in the nucleus. Its function is as follows. The association of the DR1/DRAP1 heterodimer with TBP results in a functional repression of both activated and basal transcription of class II genes. This interaction precludes the formation of a transcription-competent complex by inhibiting the association of TFIIA and/or TFIIB with TBP. Can bind to DNA on its own. The chain is Dr1-associated corepressor from Rattus norvegicus (Rat).